We begin with the raw amino-acid sequence, 676 residues long: SPARC-like protein 1 (676 aa).

An N-terminal signal peptide occupies residues 1 to 16 (MKTVLLLICLLGSAFT). Positions 35–44 (EKHKYTHSEM) are enriched in basic and acidic residues. 3 disordered regions span residues 35–151 (EKHK…WALR), 173–369 (NTVG…GVYR), and 385–437 (SEDN…RNST). Positions 95–108 (KNSLRSINFLTLHS) are enriched in polar residues. An N-linked (GlcNAc...) asparagine glycan is attached at Asn-182. A compositionally biased stretch (acidic residues) spans 184 to 202 (SEEEEAGEEEDEEWGEETD). Basic and acidic residues-rich tracts occupy residues 249 to 266 (EKFS…KEGK) and 273 to 291 (NHNE…KEHF). Over residues 312-328 (NAEEDDNDSGDDGEEDL) the composition is skewed to acidic residues. N-linked (GlcNAc...) asparagine glycosylation occurs at Asn-318. Basic and acidic residues predominate over residues 385–394 (SEDNHYHHEP). Asn-396 carries an N-linked (GlcNAc...) asparagine glycan. A compositionally biased stretch (low complexity) spans 397–408 (SSSKQQLQTSSS). Asn-413 carries an N-linked (GlcNAc...) asparagine glycan. The segment covering 415 to 433 (TEHEDEVKTTGGSYHEESA) has biased composition (basic and acidic residues). The N-linked (GlcNAc...) asparagine glycan is linked to Asn-435. In terms of domain architecture, Follistatin-like spans 444 to 466 (LCRNFHCKRGKVCQADKQGKPSC). 7 cysteine pairs are disulfide-bonded: Cys-445–Cys-456, Cys-450–Cys-466, Cys-468–Cys-502, Cys-474–Cys-495, Cys-484–Cys-521, Cys-527–Cys-638, and Cys-646–Cys-662. In terms of domain architecture, Kazal-like spans 462–523 (GKPSCICQDP…HLDYMGACKH (62 aa)). N-linked (GlcNAc...) asparagine glycosylation is present at Asn-488. The EF-hand domain maps to 634-669 (PMEHCITRFFQECDGDQDKLITLKEWCHCFAIKEED). 4 residues coordinate Ca(2+): Asp-647, Asp-649, Asp-651, and Glu-658.

This sequence belongs to the SPARC family. In terms of tissue distribution, glial (Mueller) cells of the neuroretina.

It localises to the secreted. It is found in the extracellular space. The protein resides in the extracellular matrix. In terms of biological role, could play a role in the late stage of neuroretina morphogenesis. The chain is SPARC-like protein 1 (SPARCL1) from Coturnix japonica (Japanese quail).